The primary structure comprises 283 residues: Bifunctional protein FolD (283 aa).

Residues 166–168, serine 191, and isoleucine 232 each bind NADP(+); that span reads GAS.

Belongs to the tetrahydrofolate dehydrogenase/cyclohydrolase family. In terms of assembly, homodimer.

It catalyses the reaction (6R)-5,10-methylene-5,6,7,8-tetrahydrofolate + NADP(+) = (6R)-5,10-methenyltetrahydrofolate + NADPH. The enzyme catalyses (6R)-5,10-methenyltetrahydrofolate + H2O = (6R)-10-formyltetrahydrofolate + H(+). Its pathway is one-carbon metabolism; tetrahydrofolate interconversion. Catalyzes the oxidation of 5,10-methylenetetrahydrofolate to 5,10-methenyltetrahydrofolate and then the hydrolysis of 5,10-methenyltetrahydrofolate to 10-formyltetrahydrofolate. The protein is Bifunctional protein FolD of Chromobacterium violaceum (strain ATCC 12472 / DSM 30191 / JCM 1249 / CCUG 213 / NBRC 12614 / NCIMB 9131 / NCTC 9757 / MK).